Here is a 279-residue protein sequence, read N- to C-terminus: MKTTTDFLKMKAAGEKIVMVTAYDYPAAKFAEAANVDMILVGDSLGMVVLGYDSTMPVTVADMIHHAKATRRGAKDTFVVVDMPFGSYHGDVNETLKTAIYMMQETGADALKVEGAGDIIPVIQKLTTAGIPVVAHLGLLPQSAGVLGGYKVQGKTAEQATKLIEDAKQCEEAGACAVVLECIPHQLTEIVSAHLIIPTIGIGAGVEADGQVLVYHDMLSYGSHHVPKFVQQFANMGKEASEGMVRYVEAVKAGTFPAQKHFFTMKEDALDQLYGGVQS.

D43 and D82 together coordinate Mg(2+). 3-methyl-2-oxobutanoate is bound by residues 43–44 (DS), D82, and K112. A Mg(2+)-binding site is contributed by E114. E181 serves as the catalytic Proton acceptor.

This sequence belongs to the PanB family. Homodecamer; pentamer of dimers. The cofactor is Mg(2+).

It localises to the cytoplasm. The enzyme catalyses 3-methyl-2-oxobutanoate + (6R)-5,10-methylene-5,6,7,8-tetrahydrofolate + H2O = 2-dehydropantoate + (6S)-5,6,7,8-tetrahydrofolate. It functions in the pathway cofactor biosynthesis; (R)-pantothenate biosynthesis; (R)-pantoate from 3-methyl-2-oxobutanoate: step 1/2. Functionally, catalyzes the reversible reaction in which hydroxymethyl group from 5,10-methylenetetrahydrofolate is transferred onto alpha-ketoisovalerate to form ketopantoate. The sequence is that of 3-methyl-2-oxobutanoate hydroxymethyltransferase from Lysinibacillus sphaericus (strain C3-41).